A 272-amino-acid chain; its full sequence is Glutamate racemase (272 aa).

Substrate is bound by residues 16-17 (DS) and 48-49 (YG). The active-site Proton donor/acceptor is the cysteine 79. 80 to 81 (NT) provides a ligand contact to substrate. Residue cysteine 191 is the Proton donor/acceptor of the active site. Position 192–193 (192–193 (TH)) interacts with substrate.

Belongs to the aspartate/glutamate racemases family.

It catalyses the reaction L-glutamate = D-glutamate. The protein operates within cell wall biogenesis; peptidoglycan biosynthesis. Its function is as follows. Provides the (R)-glutamate required for cell wall biosynthesis. The chain is Glutamate racemase from Chlorobaculum tepidum (strain ATCC 49652 / DSM 12025 / NBRC 103806 / TLS) (Chlorobium tepidum).